Reading from the N-terminus, the 288-residue chain is Quinate/shikimate dehydrogenase (288 aa).

Substrate contacts are provided by Lys71 and Asp107. Residues 132 to 135, 155 to 158, Lys205, 232 to 235, and Gly255 contribute to the NAD(+) site; these read AGGA, NRRD, and CVYN.

It belongs to the shikimate dehydrogenase family. Homodimer.

It carries out the reaction L-quinate + NAD(+) = 3-dehydroquinate + NADH + H(+). The catalysed reaction is L-quinate + NADP(+) = 3-dehydroquinate + NADPH + H(+). It catalyses the reaction shikimate + NADP(+) = 3-dehydroshikimate + NADPH + H(+). The enzyme catalyses shikimate + NAD(+) = 3-dehydroshikimate + NADH + H(+). It functions in the pathway metabolic intermediate biosynthesis; chorismate biosynthesis; chorismate from D-erythrose 4-phosphate and phosphoenolpyruvate: step 4/7. The actual biological function of YdiB remains unclear, nor is it known whether 3-dehydroshikimate or quinate represents the natural substrate. Catalyzes the reversible NAD-dependent reduction of both 3-dehydroshikimate (DHSA) and 3-dehydroquinate to yield shikimate (SA) and quinate, respectively. It can use both NAD or NADP for catalysis, however it has higher catalytic efficiency with NAD. In Escherichia coli O157:H7, this protein is Quinate/shikimate dehydrogenase.